We begin with the raw amino-acid sequence, 38 residues long: Photosystem II reaction center protein L (38 aa).

A helical membrane pass occupies residues serine 17 to phenylalanine 37.

It belongs to the PsbL family. As to quaternary structure, PSII is composed of 1 copy each of membrane proteins PsbA, PsbB, PsbC, PsbD, PsbE, PsbF, PsbH, PsbI, PsbJ, PsbK, PsbL, PsbM, PsbT, PsbX, PsbY, PsbZ, Psb30/Ycf12, at least 3 peripheral proteins of the oxygen-evolving complex and a large number of cofactors. It forms dimeric complexes.

The protein localises to the plastid. Its subcellular location is the chloroplast thylakoid membrane. One of the components of the core complex of photosystem II (PSII). PSII is a light-driven water:plastoquinone oxidoreductase that uses light energy to abstract electrons from H(2)O, generating O(2) and a proton gradient subsequently used for ATP formation. It consists of a core antenna complex that captures photons, and an electron transfer chain that converts photonic excitation into a charge separation. This subunit is found at the monomer-monomer interface and is required for correct PSII assembly and/or dimerization. The sequence is that of Photosystem II reaction center protein L from Gnetum gnemon (Spanish joint-fir).